Reading from the N-terminus, the 557-residue chain is Arginine--tRNA ligase (557 aa).

The short motif at 132 to 142 (ANPTGNLHLGH) is the 'HIGH' region element.

It belongs to the class-I aminoacyl-tRNA synthetase family. Monomer.

It localises to the cytoplasm. The catalysed reaction is tRNA(Arg) + L-arginine + ATP = L-arginyl-tRNA(Arg) + AMP + diphosphate. The sequence is that of Arginine--tRNA ligase from Geobacillus thermodenitrificans (strain NG80-2).